Here is a 340-residue protein sequence, read N- to C-terminus: Uroporphyrinogen decarboxylase (340 aa).

Substrate-binding positions include 21–25 (RQAGR), Asp71, Tyr147, Ser202, and His315.

It belongs to the uroporphyrinogen decarboxylase family. In terms of assembly, homodimer.

The protein resides in the cytoplasm. It carries out the reaction uroporphyrinogen III + 4 H(+) = coproporphyrinogen III + 4 CO2. The protein operates within porphyrin-containing compound metabolism; protoporphyrin-IX biosynthesis; coproporphyrinogen-III from 5-aminolevulinate: step 4/4. Functionally, catalyzes the decarboxylation of four acetate groups of uroporphyrinogen-III to yield coproporphyrinogen-III. This is Uroporphyrinogen decarboxylase from Nautilia profundicola (strain ATCC BAA-1463 / DSM 18972 / AmH).